The chain runs to 613 residues: Phostensin (613 aa).

The segment covering 18-33 (EEASVRGREKAERERL) has biased composition (basic and acidic residues). 2 disordered regions span residues 18-231 (EEAS…SAYQ) and 266-500 (GEER…AVPG). Phosphoserine occurs at positions 54, 125, 133, 175, and 195. Basic and acidic residues-rich tracts occupy residues 104-154 (RSEE…ERRL) and 167-191 (LEAR…EAWK). Position 199 is a phosphothreonine (T199). Residues 199-221 (TPERSLRLAESREQSPRRKEVES) are compositionally biased toward basic and acidic residues. Residue S224 is modified to Phosphoserine. The segment covering 266–282 (GEERQDYSEECGRKEEW) has biased composition (basic and acidic residues). The span at 295–309 (LSETLTREAQGNSSA) shows a compositional bias: polar residues. Composition is skewed to basic and acidic residues over residues 314 to 327 (AEQR…RGMK), 340 to 350 (KAREWTPRDIE), and 357 to 366 (EPPESAEKLL). A phosphoserine mark is found at S368 and S432. Over residues 424-446 (QPPPPAPLSPPPPAPTAPQPPGD) the composition is skewed to pro residues. K457 carries the post-translational modification N6-acetyllysine. Residues 476–499 (PRRSVPPATPATPTSPATVDAAVP) are compositionally biased toward low complexity. 2 positions are modified to phosphoserine: S490 and S530. A disordered region spans residues 552 to 595 (QYPSESSVLEELGPEPEVPSAPNPPAAQPDDEEDEEELLLLQPE). A compositionally biased stretch (pro residues) spans 567-578 (PEVPSAPNPPAA). Positions 580 to 589 (PDDEEDEEEL) are enriched in acidic residues.

Interacts with Protein phosphatase 1 (PP1). Isoform 4 is predominantly expressed in leukocytes and spleen.

The protein resides in the cytoplasm. It is found in the cytoskeleton. In terms of biological role, may target protein phosphatase 1 to F-actin cytoskeleton. The protein is Phostensin (PPP1R18) of Homo sapiens (Human).